The primary structure comprises 51 residues: Large ribosomal subunit protein bL33 (51 aa).

The disordered stretch occupies residues 1-24 (MREKIRLNSSAGTGHFYTTDKNKR).

It belongs to the bacterial ribosomal protein bL33 family.

This Cellvibrio japonicus (strain Ueda107) (Pseudomonas fluorescens subsp. cellulosa) protein is Large ribosomal subunit protein bL33.